Reading from the N-terminus, the 173-residue chain is Putative pre-16S rRNA nuclease (173 aa).

The protein belongs to the YqgF nuclease family.

It localises to the cytoplasm. Functionally, could be a nuclease involved in processing of the 5'-end of pre-16S rRNA. The polypeptide is Putative pre-16S rRNA nuclease (Psychrobacter cryohalolentis (strain ATCC BAA-1226 / DSM 17306 / VKM B-2378 / K5)).